An 84-amino-acid chain; its full sequence is Large ribosomal subunit protein eL34 (84 aa).

Belongs to the eukaryotic ribosomal protein eL34 family.

The polypeptide is Large ribosomal subunit protein eL34 (ribL34e) (Pyrobaculum aerophilum (strain ATCC 51768 / DSM 7523 / JCM 9630 / CIP 104966 / NBRC 100827 / IM2)).